Here is a 409-residue protein sequence, read N- to C-terminus: Spermatogenesis-associated protein 2-like protein (409 aa).

3 disordered regions span residues 233-257 (EDEG…TSEL), 270-299 (LWGA…PQPE), and 313-337 (RPGD…IPEP).

The protein belongs to the SPATA2 family.

The protein is Spermatogenesis-associated protein 2-like protein (SPATA2L) of Bos taurus (Bovine).